We begin with the raw amino-acid sequence, 124 residues long: Iron-sulfur cluster insertion protein ErpA (124 aa).

3 residues coordinate iron-sulfur cluster: C52, C116, and C118.

It belongs to the HesB/IscA family. In terms of assembly, homodimer. It depends on iron-sulfur cluster as a cofactor.

In terms of biological role, required for insertion of 4Fe-4S clusters for at least IspG. The protein is Iron-sulfur cluster insertion protein ErpA of Vibrio atlanticus (strain LGP32) (Vibrio splendidus (strain Mel32)).